The sequence spans 816 residues: Transducer protein Htr18 (816 aa).

Helical transmembrane passes span 21–41 (VVIVTIMLVLVGVGVFTTQAV) and 282–302 (NIVVLIVTAVAGLGALVLVIG). One can recognise an HAMP 1 domain in the interval 303–356 (RDALTALTDMSDRAEAIAAGDIDTAIEETTRIDEVGDLRRSFRDIQEYLQTVAG). The disordered stretch occupies residues 399 to 425 (DAQETAEQSRKEAEQSREEAEALAAAL). A compositionally biased stretch (basic and acidic residues) spans 405–418 (EQSRKEAEQSREEA). Residues 423-476 (AALESQAQDIRETVEHAADGDLTQRLETDTDHESMAAIATALNSLLEELEGTIH) enclose the HAMP 2 domain. A Methyl-accepting transducer domain is found at 495 to 731 (SAEEVKRASG…EVVTMVDEVG (237 aa)). The disordered stretch occupies residues 790 to 816 (GGAENTTGAFVRSASTDHSRDATHHDT). Over residues 793 to 803 (ENTTGAFVRSA) the composition is skewed to polar residues. Basic and acidic residues predominate over residues 804 to 816 (STDHSRDATHHDT).

It belongs to the methyl-accepting chemotaxis (MCP) protein family. Post-translationally, methylated by CheR.

Its subcellular location is the cell membrane. Potentially involved in chemo- or phototactic signal transduction. This Halobacterium salinarum (strain ATCC 29341 / DSM 671 / R1) protein is Transducer protein Htr18 (htr18).